We begin with the raw amino-acid sequence, 232 residues long: Small ribosomal subunit protein uS3 (232 aa).

In terms of domain architecture, KH type-2 spans 39–107 (IRKFLKKELF…DVAINIKEEK (69 aa)). A disordered region spans residues 213–232 (QPEPAEEKKGGRRPSRKRGE). Basic residues predominate over residues 222–232 (GGRRPSRKRGE).

The protein belongs to the universal ribosomal protein uS3 family. As to quaternary structure, part of the 30S ribosomal subunit. Forms a tight complex with proteins S10 and S14.

In terms of biological role, binds the lower part of the 30S subunit head. Binds mRNA in the 70S ribosome, positioning it for translation. The protein is Small ribosomal subunit protein uS3 of Sulfurovum sp. (strain NBC37-1).